A 295-amino-acid polypeptide reads, in one-letter code: GTPase Era (295 aa).

The Era-type G domain occupies 5–172 (YCGYAAIIGR…EQAVHQLMPE (168 aa)). The segment at 13–20 (GRPNVGKS) is G1. Residue 13 to 20 (GRPNVGKS) participates in GTP binding. Residues 39 to 43 (QTTRY) are G2. The segment at 60–63 (DTPG) is G3. Residues 60-64 (DTPGL) and 121-124 (NKVD) contribute to the GTP site. Residues 121-124 (NKVD) are G4. Positions 151–153 (LSA) are G5. The KH type-2 domain maps to 203–279 (LGQEIPYSLA…FLQLWVKVKS (77 aa)).

The protein belongs to the TRAFAC class TrmE-Era-EngA-EngB-Septin-like GTPase superfamily. Era GTPase family. In terms of assembly, monomer.

The protein localises to the cytoplasm. It is found in the cell inner membrane. In terms of biological role, an essential GTPase that binds both GDP and GTP, with rapid nucleotide exchange. Plays a role in 16S rRNA processing and 30S ribosomal subunit biogenesis and possibly also in cell cycle regulation and energy metabolism. This Coxiella burnetii (strain CbuG_Q212) (Coxiella burnetii (strain Q212)) protein is GTPase Era.